Reading from the N-terminus, the 388-residue chain is MTISETWLLPDGVADVLPEQAQVIEKLRREAIDFLAVRGYQLVYTPFIEYIESLSSLSESNQDLDLVTFKVIDQLSGRLLGIRADMTPQVARIDAHVRPVEGVARYCYAGTVLHTKPQNFNATRAPLQLGAELYGHDSIEADVEMVYVMLGLIENAYTLQGAHLDLGHVGLFRSLVKYAGLSKNEEHELSDLYQRKALPELAEFTQNLNMGSDFYALGRYASDLDALQVHLSADILKDTEFDAALNALKITLEQIKNRWPALNVGIDVVELRSYHYHTGLMYAVYAPNRAAPLAQGGRYDGIGEHFGRARPATGFSCDLYALGANQFAEIETVVAPKGTEADLLKAIANARSEGLRVVQLLGNDDLSSIPYATHQLVLQNGQWNIEKI.

This sequence belongs to the class-II aminoacyl-tRNA synthetase family. HisZ subfamily. As to quaternary structure, heteromultimer composed of HisG and HisZ subunits.

Its subcellular location is the cytoplasm. Its pathway is amino-acid biosynthesis; L-histidine biosynthesis; L-histidine from 5-phospho-alpha-D-ribose 1-diphosphate: step 1/9. Functionally, required for the first step of histidine biosynthesis. May allow the feedback regulation of ATP phosphoribosyltransferase activity by histidine. The polypeptide is ATP phosphoribosyltransferase regulatory subunit (Acinetobacter baumannii (strain SDF)).